The primary structure comprises 210 residues: Methylthioribulose-1-phosphate dehydratase (210 aa).

Residues histidine 97 and histidine 99 each coordinate Zn(2+).

It belongs to the aldolase class II family. MtnB subfamily. Homotetramer. Zn(2+) is required as a cofactor.

It carries out the reaction 5-(methylsulfanyl)-D-ribulose 1-phosphate = 5-methylsulfanyl-2,3-dioxopentyl phosphate + H2O. The protein operates within amino-acid biosynthesis; L-methionine biosynthesis via salvage pathway; L-methionine from S-methyl-5-thio-alpha-D-ribose 1-phosphate: step 2/6. Functionally, catalyzes the dehydration of methylthioribulose-1-phosphate (MTRu-1-P) into 2,3-diketo-5-methylthiopentyl-1-phosphate (DK-MTP-1-P). The sequence is that of Methylthioribulose-1-phosphate dehydratase from Geobacillus kaustophilus (strain HTA426).